A 319-amino-acid polypeptide reads, in one-letter code: ATP-dependent 6-phosphofructokinase (319 aa).

Residue Gly-11 participates in ATP binding. An ADP-binding site is contributed by Arg-21–Arg-25. ATP-binding positions include Arg-72–Ser-73 and Gly-102–Ser-105. Position 103 (Asp-103) interacts with Mg(2+). Thr-125–Asp-127 serves as a coordination point for substrate. Asp-127 (proton acceptor) is an active-site residue. An ADP-binding site is contributed by Arg-154. Substrate contacts are provided by residues Arg-162 and Met-169–Arg-171. Residues Gly-185–Glu-187, Arg-211, and Lys-213–His-215 each bind ADP. Substrate is bound by residues Glu-222, Arg-243, and His-249–Arg-252.

It belongs to the phosphofructokinase type A (PFKA) family. ATP-dependent PFK group I subfamily. Prokaryotic clade 'B1' sub-subfamily. In terms of assembly, homotetramer. Requires Mg(2+) as cofactor.

The protein resides in the cytoplasm. It carries out the reaction beta-D-fructose 6-phosphate + ATP = beta-D-fructose 1,6-bisphosphate + ADP + H(+). Its pathway is carbohydrate degradation; glycolysis; D-glyceraldehyde 3-phosphate and glycerone phosphate from D-glucose: step 3/4. Its activity is regulated as follows. Allosterically activated by ADP and other diphosphonucleosides, and allosterically inhibited by phosphoenolpyruvate. Catalyzes the phosphorylation of D-fructose 6-phosphate to fructose 1,6-bisphosphate by ATP, the first committing step of glycolysis. In Oceanobacillus iheyensis (strain DSM 14371 / CIP 107618 / JCM 11309 / KCTC 3954 / HTE831), this protein is ATP-dependent 6-phosphofructokinase.